A 113-amino-acid polypeptide reads, in one-letter code: N(2)-fixation sustaining protein CowN (113 aa).

Belongs to the CowN family.

In terms of biological role, is required to sustain N(2)-dependent growth in the presence of low levels of carbon monoxide (CO). Probably acts by protecting the N(2) fixation ability of the nitrogenase complex, which is inactivated in the presence of CO. The polypeptide is N(2)-fixation sustaining protein CowN (Azoarcus sp. (strain BH72)).